The chain runs to 277 residues: NADPH-dependent 7-cyano-7-deazaguanine reductase (277 aa).

86-88 contributes to the substrate binding site; the sequence is IES. 88–89 lines the NADPH pocket; it reads SK. Catalysis depends on C185, which acts as the Thioimide intermediate. D192 serves as the catalytic Proton donor. 224 to 225 is a binding site for substrate; the sequence is HE. Position 253–254 (253–254) interacts with NADPH; the sequence is RG.

The protein belongs to the GTP cyclohydrolase I family. QueF type 2 subfamily. In terms of assembly, homodimer.

The protein localises to the cytoplasm. The enzyme catalyses 7-aminomethyl-7-carbaguanine + 2 NADP(+) = 7-cyano-7-deazaguanine + 2 NADPH + 3 H(+). It participates in tRNA modification; tRNA-queuosine biosynthesis. In terms of biological role, catalyzes the NADPH-dependent reduction of 7-cyano-7-deazaguanine (preQ0) to 7-aminomethyl-7-deazaguanine (preQ1). This is NADPH-dependent 7-cyano-7-deazaguanine reductase from Hydrogenovibrio crunogenus (strain DSM 25203 / XCL-2) (Thiomicrospira crunogena).